We begin with the raw amino-acid sequence, 424 residues long: O-methyltransferase aunD (424 aa).

D275 contributes to the S-adenosyl-L-methionine binding site. The active-site Proton acceptor is H326.

It belongs to the class I-like SAM-binding methyltransferase superfamily. Cation-independent O-methyltransferase family.

The protein operates within secondary metabolite biosynthesis. O-methyltransferase; part of the gene cluster that mediates the biosynthesis of aurasperone B, a dimeric gamma-naphthopyrone. The first step in the biosynthesis of aurasperone B is the production of gamma-naphthopyrone precursor YWA1 by the non-reducing polyketide synthase albA, via condensation of one acetyl-CoA starter unit with 6 malonyl-CoA units. YWA1 is then methylated by aunE at position C-6 to yield foncesin which is further methylated at position C-8 by aunD to produce fonsecin B. A key enzyme in the biosynthetic pathway is the cytochrome P450 monooxygenase aunB which catalyzes the oxidative dimerization of fonsecin B to aurasperone B. AunB also catalyzes the oxidative dimerization of rubrofusarin B into aurasperone A. This Aspergillus niger (strain ATCC 1015 / CBS 113.46 / FGSC A1144 / LSHB Ac4 / NCTC 3858a / NRRL 328 / USDA 3528.7) protein is O-methyltransferase aunD.